The following is a 628-amino-acid chain: tRNA 5-methylaminomethyl-2-thiouridine biosynthesis bifunctional protein MnmC (628 aa).

The segment at 1 to 237 (MSSYSPLVPP…KWHMTVGVRE (237 aa)) is tRNA (mnm(5)s(2)U34)-methyltransferase. Positions 265–628 (VGGGLAGAGI…ADLLAAVAPR (364 aa)) are FAD-dependent cmnm(5)s(2)U34 oxidoreductase.

In the N-terminal section; belongs to the methyltransferase superfamily. tRNA (mnm(5)s(2)U34)-methyltransferase family. This sequence in the C-terminal section; belongs to the DAO family. Requires FAD as cofactor.

It localises to the cytoplasm. It catalyses the reaction 5-aminomethyl-2-thiouridine(34) in tRNA + S-adenosyl-L-methionine = 5-methylaminomethyl-2-thiouridine(34) in tRNA + S-adenosyl-L-homocysteine + H(+). Functionally, catalyzes the last two steps in the biosynthesis of 5-methylaminomethyl-2-thiouridine (mnm(5)s(2)U) at the wobble position (U34) in tRNA. Catalyzes the FAD-dependent demodification of cmnm(5)s(2)U34 to nm(5)s(2)U34, followed by the transfer of a methyl group from S-adenosyl-L-methionine to nm(5)s(2)U34, to form mnm(5)s(2)U34. The chain is tRNA 5-methylaminomethyl-2-thiouridine biosynthesis bifunctional protein MnmC from Bordetella petrii (strain ATCC BAA-461 / DSM 12804 / CCUG 43448).